Here is a 206-residue protein sequence, read N- to C-terminus: RNA pyrophosphohydrolase (206 aa).

The Nudix hydrolase domain occupies G6–K150. The Nudix box signature appears at G38–G59. Residues K162–K191 are compositionally biased toward basic and acidic residues. Residues K162 to Q206 are disordered.

It belongs to the Nudix hydrolase family. RppH subfamily. A divalent metal cation serves as cofactor.

In terms of biological role, accelerates the degradation of transcripts by removing pyrophosphate from the 5'-end of triphosphorylated RNA, leading to a more labile monophosphorylated state that can stimulate subsequent ribonuclease cleavage. The chain is RNA pyrophosphohydrolase from Actinobacillus pleuropneumoniae serotype 3 (strain JL03).